Reading from the N-terminus, the 271-residue chain is Regulatory protein RecX (271 aa).

Belongs to the RecX family.

The protein localises to the cytoplasm. Its function is as follows. Modulates RecA activity. The chain is Regulatory protein RecX from Lactobacillus johnsonii (strain CNCM I-12250 / La1 / NCC 533).